The sequence spans 259 residues: Small ribosomal subunit protein mS23 (259 aa).

It belongs to the mitochondrion-specific ribosomal protein mS23 family. In terms of assembly, component of the mitochondrial small ribosomal subunit.

The protein resides in the mitochondrion. The polypeptide is Small ribosomal subunit protein mS23 (RSM25) (Pyricularia oryzae (strain 70-15 / ATCC MYA-4617 / FGSC 8958) (Rice blast fungus)).